We begin with the raw amino-acid sequence, 201 residues long: FMN reductase (NADH) RutF 1 (201 aa).

Residues 167–195 are compositionally biased toward low complexity; it reads PRAPRSGSAPAEPARAARAVGARPAEGPA. A disordered region spans residues 167–201; it reads PRAPRSGSAPAEPARAARAVGARPAEGPALALRSA.

It belongs to the non-flavoprotein flavin reductase family. RutF subfamily.

The enzyme catalyses FMNH2 + NAD(+) = FMN + NADH + 2 H(+). Functionally, catalyzes the reduction of FMN to FMNH2 which is used to reduce pyrimidine by RutA via the Rut pathway. In Methylorubrum extorquens (strain CM4 / NCIMB 13688) (Methylobacterium extorquens), this protein is FMN reductase (NADH) RutF 1.